Reading from the N-terminus, the 572-residue chain is Methionine--tRNA ligase (572 aa).

The short motif at Pro-11 to Asn-21 is the 'HIGH' region element. 4 residues coordinate Zn(2+): Cys-143, Cys-146, Cys-156, and Cys-159. A 'KMSKS' region motif is present at residues Gln-346–Ser-350. Thr-349 is a binding site for ATP.

It belongs to the class-I aminoacyl-tRNA synthetase family. MetG type 1 subfamily. As to quaternary structure, monomer. Requires Zn(2+) as cofactor.

The protein localises to the cytoplasm. The catalysed reaction is tRNA(Met) + L-methionine + ATP = L-methionyl-tRNA(Met) + AMP + diphosphate. Is required not only for elongation of protein synthesis but also for the initiation of all mRNA translation through initiator tRNA(fMet) aminoacylation. The chain is Methionine--tRNA ligase from Cereibacter sphaeroides (strain ATCC 17029 / ATH 2.4.9) (Rhodobacter sphaeroides).